The sequence spans 258 residues: uncharacterized protein (258 aa).

Residues 40–54 (AQKTDTPLDSSSYAV) are compositionally biased toward polar residues. The tract at residues 40–63 (AQKTDTPLDSSSYAVTSPEEAPNE) is disordered.

This is an uncharacterized protein from Treponema pallidum (strain Nichols).